A 404-amino-acid polypeptide reads, in one-letter code: Serine/threonine transporter SstT (404 aa).

8 helical membrane-spanning segments follow: residues 17–37 (IGIG…LTGF), 39–59 (ILGK…VFAL), 75–95 (MTLI…VAVL), 138–158 (ALAT…GLAL), 179–199 (IVVW…FTTI), 212–232 (FLIL…NPLI), 287–307 (IPLG…VLTL), and 313–333 (FGIP…AVSA).

This sequence belongs to the dicarboxylate/amino acid:cation symporter (DAACS) (TC 2.A.23) family.

The protein resides in the cell membrane. It catalyses the reaction L-serine(in) + Na(+)(in) = L-serine(out) + Na(+)(out). The enzyme catalyses L-threonine(in) + Na(+)(in) = L-threonine(out) + Na(+)(out). In terms of biological role, involved in the import of serine and threonine into the cell, with the concomitant import of sodium (symport system). This Streptococcus pyogenes serotype M5 (strain Manfredo) protein is Serine/threonine transporter SstT.